Consider the following 419-residue polypeptide: Gustatory receptor for bitter taste 93a (419 aa).

The Cytoplasmic portion of the chain corresponds to 1 to 55 (MFSSSSAMTGKRAESWSRLLLLWLYRCARGLLVLSSSLDRDKLQLKATKQGSRNR). Residues 56-76 (FLHILWRCIVVMIYAGLWPML) form a helical membrane-spanning segment. Over 77-90 (TSAVIGKRLESYAD) the chain is Extracellular. The chain crosses the membrane as a helical span at residues 91-111 (VLALAQSMSVSILAVISFVIQ). Residues 112–145 (ARGENQFREVLNRYLALYQRICLTTRLRHLFPTK) lie on the Cytoplasmic side of the membrane. The chain crosses the membrane as a helical span at residues 146-166 (FVVFFLLKLFFTLCGCFHEII). The Extracellular portion of the chain corresponds to 167 to 184 (PLFENSHFDDISQMVGTG). The chain crosses the membrane as a helical span at residues 185-205 (FGIYMWLGTLCVLDACFLGFL). Topologically, residues 206–277 (VSGILYEHMA…NSFRRILQWQ (72 aa)) are cytoplasmic. A helical membrane pass occupies residues 278–298 (ILFYIYLNFINICLMLYQYIL). The Extracellular segment spans residues 299–305 (HFLNDDE). A helical transmembrane segment spans residues 306-326 (VVFVSIVMAFVKLANLVLLMM). The Cytoplasmic portion of the chain corresponds to 327–383 (CADYTVRQSEVPKKLPLDIVCSDMDERWDKSVETFLGQLQTQRLEIKVLGFFHLNNE). The chain crosses the membrane as a helical span at residues 384–404 (FILLILSAIISYLFILIQFGI). At 405–419 (TGGFEASEDIKNRFD) the chain is on the extracellular side.

It belongs to the insect chemoreceptor superfamily. Gustatory receptor (GR) family. Gr93a subfamily. As to expression, in larvae, is expressed in neurons of the dorsal pharyngeal sense organs.

It is found in the cell membrane. In terms of biological role, gustatory receptor required for response to the bitter in taste neurons. Gr93a cells respond to bitter compounds such as caffeine. Flies avoid bitter substances, suggesting that Gr93a neuron activity is sufficient to mediate avoidance behavior. In Drosophila melanogaster (Fruit fly), this protein is Gustatory receptor for bitter taste 93a (Gr93a).